The following is a 791-amino-acid chain: MKTKSKKLKSDLSIGEFEDIFQEIPEQLPVVVISEIMPIPNVDFRIEVSDNSYLKALKESETNANSFVILLTQKGLSHNKPKLTNLQRYGVLAQIITKVKIPHGDFKVRFRILQRVKIDKFLQKEPFLKVSYEKVKTVYGSIEEEKALIKLVIEKIMDKPFQLLVQNTNNFLDIIKTEPETENITDIIIFNLKIDDLDKYKYLKESHLNKRIFYILQDIQSLLIGLDLEQKINEKVKQSIDENQKEFYLREKMKAIQLELGDKAKKEEEIAELRDKIKKTPLPPEIKKKALQELSRYQTSSLMAESFVIKNYLDFLLELPWGKTSQDENDLVAIEKSLNNQHYGLQKVKERILEYAAVKIMTKKNPQNILCLVGPPGVGKTSLASSIAKALGRQFVRQSLGGLKEESEIRGHRRTYIGAMPGRILAGIRDAKTVNPVFLLDEIDKLVTNYNFDPASALLEVLDPQQNINFMDHFLSEPFDLSQVLFIATANYLDNVPEALKDRMEIIEVSSYTEKDKINIASKYLLKKQLKNHGITDTNLVIDNDTILYLIRHYTKEAGVRELDRILAELARKTVKECLIKKKEQVIITTKNVTKYLGKEKYLNLLDEQKEKIGSTNGLAYTYFGGDLLPVEVTYYKGKGQLVLTGKLGEVLKESAYTALSFIKANCQNLGIDANIFAENDFHIHLPEAAIPKDGPSAGITIATSLVSAITQKYIKKGLGMTGEITLRGNILAIGGLKEKAIAANRSGLDTIFIPQENLKDIEDIPEEVRNKLNIIPVSNISDVFSQVFVV.

The region spanning 28–223 (LPVVVISEIM…YILQDIQSLL (196 aa)) is the Lon N-terminal domain. 374–381 (GPPGVGKT) is an ATP binding site. Residues 610 to 791 (KEKIGSTNGL…SDVFSQVFVV (182 aa)) form the Lon proteolytic domain. Residues Ser697 and Lys740 contribute to the active site.

This sequence belongs to the peptidase S16 family. In terms of assembly, homohexamer. Organized in a ring with a central cavity.

The protein localises to the cytoplasm. It catalyses the reaction Hydrolysis of proteins in presence of ATP.. Its function is as follows. ATP-dependent serine protease that mediates the selective degradation of mutant and abnormal proteins as well as certain short-lived regulatory proteins. Required for cellular homeostasis and for survival from DNA damage and developmental changes induced by stress. Degrades polypeptides processively to yield small peptide fragments that are 5 to 10 amino acids long. Binds to DNA in a double-stranded, site-specific manner. The sequence is that of Lon protease from Aster yellows witches'-broom phytoplasma (strain AYWB).